A 935-amino-acid polypeptide reads, in one-letter code: Coatomer subunit gamma (935 aa).

HEAT repeat units follow at residues 258–296 (PQLFSQFRPLLSDWLSNKFESVQLETAKLITSFATRNSR), 337–372 (PEKIVVCNPELESLINDSNRNISTYAITTLLKTGTS), 373–410 (KNISSLISTITNFIHDVSDDFKIIIIDAVRTLSLNFPQ), 412–449 (WKSILNFLIDVLKNSEGGFKFKNSIVEALIDIVSFVPQ), and 524–562 (PTLYESIISLLKRIANDKDDEVRDRATIALEFIDSARNK). Residues 630-656 (KSETTLDTTPEAESVPEKRADANSFAG) form a disordered region. Phosphothreonine is present on T638. The residue at position 643 (S643) is a Phosphoserine. K647 is covalently cross-linked (Glycyl lysine isopeptide (Lys-Gly) (interchain with G-Cter in ubiquitin)). S653 carries the post-translational modification Phosphoserine.

It belongs to the COPG family. In terms of assembly, oligomeric complex that consists of at least the alpha, beta, beta', gamma, delta, epsilon and zeta subunits. Interacts (via C-terminus) with GEA1 (via N-terminal region) and KEI1 (via C-terminal region).

The protein resides in the cytoplasm. The protein localises to the golgi apparatus membrane. Its subcellular location is the cytoplasmic vesicle. It is found in the COPI-coated vesicle membrane. It localises to the endosome. Its function is as follows. The coatomer is a cytosolic protein complex that binds to dilysine motifs and reversibly associates with Golgi non-clathrin-coated vesicles, which further mediate biosynthetic protein transport from the ER, via the Golgi up to the trans Golgi network. Coatomer complex is required for budding from Golgi membranes, and is essential for the retrograde Golgi-to-ER transport of dilysine-tagged proteins. The polypeptide is Coatomer subunit gamma (SEC21) (Saccharomyces cerevisiae (strain ATCC 204508 / S288c) (Baker's yeast)).